The chain runs to 301 residues: Very-long-chain aldehyde decarbonylase GL1-10 (301 aa).

3 consecutive transmembrane segments (helical) span residues V36 to V56, F94 to I114, and S187 to L207. The Fatty acid hydroxylase domain occupies L131–T265.

Belongs to the sterol desaturase family. As to quaternary structure, homodimer. Expressed ubiquitously.

It is found in the endoplasmic reticulum membrane. It carries out the reaction a long-chain fatty aldehyde + 2 NADPH + O2 + H(+) = a long-chain alkane + formate + 2 NADP(+) + H2O. In terms of biological role, aldehyde decarbonylase involved in the conversion of aldehydes to alkanes. Core component of a very-long-chain alkane synthesis complex. This Oryza sativa subsp. japonica (Rice) protein is Very-long-chain aldehyde decarbonylase GL1-10.